The following is a 444-amino-acid chain: Nuclear envelope integral membrane protein 1 (444 aa).

Residues 1–43 (MAGGMKVAVSPAVGPGPWGSGVGGGGTVRLLLILSGCLVYGTA) form the signal peptide. N125 is a glycosylation site (N-linked (GlcNAc...) asparagine). 5 helical membrane-spanning segments follow: residues 161 to 181 (PKLF…DLLS), 186 to 206 (FYYS…IIFI), 216 to 236 (PIYV…QLVF), 245 to 265 (CYWQ…FAVC), and 289 to 309 (LCFM…IIIA). The interval 186-297 (FYYSTGMSVG…GLCFMYSGIQ (112 aa)) is a; required for its colocalization with lamins at the nuclear envelope. The interval 336-405 (PVPPRLLTEE…LTPNEVSVHE (70 aa)) is b; required for interaction with RAN-GTP. Positions 336–444 (PVPPRLLTEE…PAITQNNFLT (109 aa)) are required for nuclear localization. Phosphoserine occurs at positions 368, 424, and 425.

Belongs to the NEMP family. As to quaternary structure, homooligomer. Interacts with RAN-GTP. Interacts with EMD. Post-translationally, phosphorylation may regulate its interaction with RAN-GTP.

It localises to the nucleus inner membrane. Its subcellular location is the nucleus envelope. Together with EMD, contributes to nuclear envelope stiffness in germ cells. Required for female fertility. Essential for normal erythropoiesis. Required for efficient nuclear envelope opening and enucleation during the late stages of erythroblast maturation. This is Nuclear envelope integral membrane protein 1 (NEMP1) from Pongo abelii (Sumatran orangutan).